The following is a 1257-amino-acid chain: Insulin receptor substrate 4 (1257 aa).

Residues Glu-78–Leu-199 enclose the PH domain. The IRS-type PTB domain occupies Tyr-231–Glu-335. Disordered stretches follow at residues Val-406–Phe-653, Ile-678–Tyr-921, and Gln-1179–Arg-1257. Residues His-408–Arg-424 show a composition bias toward basic residues. The YXXM motif 1 signature appears at Tyr-487–Met-490. The segment covering Ser-495–Gly-509 has biased composition (gly residues). A compositionally biased stretch (low complexity) spans Gln-510–Gly-524. Composition is skewed to gly residues over residues Glu-525–Gly-542 and Gly-551–Gly-599. Residues Met-627–Ala-640 are compositionally biased toward pro residues. Over residues Gly-641–Gly-650 the composition is skewed to gly residues. Residues Ile-678–Ser-800 are CRK-binding. 3 consecutive short sequence motifs (YXXM motif) follow at residues Tyr-700–Met-703, Tyr-717–Met-720, and Tyr-743–Met-746. The span at Val-750 to Ala-761 shows a compositional bias: pro residues. Positions Asp-763–Asp-774 are enriched in basic and acidic residues. Positions Tyr-779–Met-782 match the YXXM motif 5 motif. Over residues Ser-800–Ser-810 the composition is skewed to low complexity. Residues Phe-815–Ser-826 show a composition bias toward polar residues. Positions Tyr-828–Met-831 match the YXXM motif 6 motif. The span at Gly-840–Ala-855 shows a compositional bias: basic and acidic residues. The segment at Ile-895–Lys-897 is GRB2-binding. At Tyr-921 the chain carries Phosphotyrosine. The YXXM motif 7 motif lies at Tyr-921–Met-924. Residues Asp-1236–Arg-1257 are compositionally biased toward basic and acidic residues.

Interacts with SOCS6 in response to stimulation with either insulin or IGF1. Interacts with CRK and CRKL. Interaction with CRK is stronger than with CRKL. Interacts with CRK via the phosphorylated YXXM motifs. Interacts with GRB2 and PIK3R1. Interacts with PLC-gamma, SHC1, PTK6, PPP4C and NISCH. Interacts with ASB4; this interaction promotes IRS4 proteasomal degradation. Post-translationally, phosphorylated on tyrosine residues in response to both insulin and IGF1 signaling. Phosphorylated on Tyr-921 in response to FGF2 signaling. Phosphorylation of Tyr-921 is required for GRB2, phospholipase C-gamma and phosphatidylinositol 3-kinase interaction. Ubiquitinated in a ASB4-dependent manner, leading to proteasomal degradation. As to expression, expressed in myoblasts. Expressed in liver and hepatocellular carcinoma.

The protein resides in the cell membrane. Its function is as follows. Acts as an interface between multiple growth factor receptors possessing tyrosine kinase activity, such as insulin receptor, IGF1R and FGFR1, and a complex network of intracellular signaling molecules containing SH2 domains. Involved in the IGF1R mitogenic signaling pathway. Promotes the AKT1 signaling pathway and BAD phosphorylation during insulin stimulation without activation of RPS6KB1 or the inhibition of apoptosis. Interaction with GRB2 enhances insulin-stimulated mitogen-activated protein kinase activity. May be involved in nonreceptor tyrosine kinase signaling in myoblasts. Plays a pivotal role in the proliferation/differentiation of hepatoblastoma cell through EPHB2 activation upon IGF1 stimulation. May play a role in the signal transduction in response to insulin and to a lesser extent in response to IL4 and GH on mitogenesis. Plays a role in growth, reproduction and glucose homeostasis. May act as negative regulators of the IGF1 signaling pathway by suppressing the function of IRS1 and IRS2. In Homo sapiens (Human), this protein is Insulin receptor substrate 4 (IRS4).